The primary structure comprises 189 residues: Large ribosomal subunit protein uL6 (189 aa).

This sequence belongs to the universal ribosomal protein uL6 family. Part of the 50S ribosomal subunit.

Its function is as follows. This protein binds to the 23S rRNA, and is important in its secondary structure. It is located near the subunit interface in the base of the L7/L12 stalk, and near the tRNA binding site of the peptidyltransferase center. The protein is Large ribosomal subunit protein uL6 of Phocaeicola vulgatus (strain ATCC 8482 / DSM 1447 / JCM 5826 / CCUG 4940 / NBRC 14291 / NCTC 11154) (Bacteroides vulgatus).